The primary structure comprises 134 residues: ATP synthase epsilon chain (134 aa).

Positions 100–134 (NQKLQNENLSEEEKEHYEKQRSRSQALLNLASAKV) are disordered. Over residues 110–120 (EEEKEHYEKQR) the composition is skewed to basic and acidic residues.

Belongs to the ATPase epsilon chain family. F-type ATPases have 2 components, CF(1) - the catalytic core - and CF(0) - the membrane proton channel. CF(1) has five subunits: alpha(3), beta(3), gamma(1), delta(1), epsilon(1). CF(0) has three main subunits: a, b and c.

It is found in the cell inner membrane. Its function is as follows. Produces ATP from ADP in the presence of a proton gradient across the membrane. The sequence is that of ATP synthase epsilon chain from Sulfurihydrogenibium sp. (strain YO3AOP1).